Reading from the N-terminus, the 959-residue chain is Protovillin (959 aa).

The tail stretch occupies residues 1-53 (MEPPLELPTQRKRVIPSKFGILKRNAEIEAEKNRENLQQSSCFSHINEIGKEI). A core region spans residues 54–832 (GLEIWKIIDD…PIMLPTSGVT (779 aa)). Gelsolin-like repeat units follow at residues 64 to 116 (STIQ…SQET), 204 to 244 (IRVK…LEKG), 309 to 366 (IKLY…DQRT), 479 to 529 (RNKF…EDKG), 603 to 647 (INIH…KEAA), and 713 to 754 (FKVF…TEKL). 2 tandem repeats follow at residues 840–849 (TPKPITTPTV) and 851–860 (TPKPITTPTV). Residues 840-860 (TPKPITTPTVTTPKPITTPTV) are 2 X 10 AA repeats of T-P-K-P-I-T-T-P-T-V. In terms of domain architecture, HP spans 895–959 (TTITTFYPLS…KQLRVDNGLF (65 aa)).

It belongs to the villin/gelsolin family.

The protein resides in the cytoplasm. It is found in the cytoskeleton. Its function is as follows. Caps actin filaments but displays neither severing nor cross-linking nor nucleating activities. Protovillin seems to be a villin precursor with only archaic capping activity. It lacks essential changes in the sequence to allow bundling of actin filaments and consequently the appearance of microvilli. In Dictyostelium discoideum (Social amoeba), this protein is Protovillin (vilB).